Consider the following 202-residue polypeptide: Protein phosphatase inhibitor 2 family member C (202 aa).

Disordered regions lie at residues 1 to 51 (MSAS…DESS) and 71 to 118 (PGTS…EQES). A required for binding PPP1CC region spans residues 12–17 (KGILKN). The segment covering 19 to 35 (SSSGSSVATSGQQSGGT) has biased composition (low complexity). Residues 43–55 (KSQKWDESSILAA) form a required for binding PPP1CC region. Residues 71-80 (PGTSYMSVQD) show a composition bias toward polar residues. The segment covering 84-112 (DSVRDVEGEDSVRGVEGKEATDASDHSCE) has biased composition (basic and acidic residues). Residues 144–147 (HYNE) form a required for binding PPP1CC catalytic center, displacing metal ions and inhibition of PPP1CC catalytic activity region. Residues 162–202 (LQSEDNENEETPQGTNEEKTAAEESEEAPLTGGLQTQSCDP) form a disordered region.

Belongs to the protein phosphatase inhibitor 2 family. Detected in sperm (at protein level).

Functionally, functions as a protein phosphatase inhibitor. It inhibits activity of the catalytic subunit of PP1 and weakly inhibits the activity of myosin-associated phosphates. In Homo sapiens (Human), this protein is Protein phosphatase inhibitor 2 family member C.